The sequence spans 155 residues: Endoribonuclease YbeY (155 aa).

3 residues coordinate Zn(2+): H120, H124, and H130.

This sequence belongs to the endoribonuclease YbeY family. The cofactor is Zn(2+).

Its subcellular location is the cytoplasm. In terms of biological role, single strand-specific metallo-endoribonuclease involved in late-stage 70S ribosome quality control and in maturation of the 3' terminus of the 16S rRNA. This is Endoribonuclease YbeY from Staphylococcus epidermidis (strain ATCC 35984 / DSM 28319 / BCRC 17069 / CCUG 31568 / BM 3577 / RP62A).